Consider the following 379-residue polypeptide: Chaperone protein DnaJ (379 aa).

Positions 7–72 (CYYETLEVER…DKRAAYDRYG (66 aa)) constitute a J domain. Residues 135 to 213 (GKTAQIEIPV…CTGSGRVTKE (79 aa)) form a CR-type zinc finger. 8 residues coordinate Zn(2+): Cys148, Cys151, Cys165, Cys168, Cys187, Cys190, Cys201, and Cys204. CXXCXGXG motif repeat units follow at residues 148–155 (CESCSGTG), 165–172 (CSTCGGAG), 187–194 (CPSCQGRG), and 201–208 (CPSCTGSG).

The protein belongs to the DnaJ family. Homodimer. Zn(2+) serves as cofactor.

It localises to the cytoplasm. Functionally, participates actively in the response to hyperosmotic and heat shock by preventing the aggregation of stress-denatured proteins and by disaggregating proteins, also in an autonomous, DnaK-independent fashion. Unfolded proteins bind initially to DnaJ; upon interaction with the DnaJ-bound protein, DnaK hydrolyzes its bound ATP, resulting in the formation of a stable complex. GrpE releases ADP from DnaK; ATP binding to DnaK triggers the release of the substrate protein, thus completing the reaction cycle. Several rounds of ATP-dependent interactions between DnaJ, DnaK and GrpE are required for fully efficient folding. Also involved, together with DnaK and GrpE, in the DNA replication of plasmids through activation of initiation proteins. The sequence is that of Chaperone protein DnaJ from Rhodopseudomonas palustris (strain HaA2).